We begin with the raw amino-acid sequence, 820 residues long: Potassium channel GORK (820 aa).

Topologically, residues 1 to 69 are cytoplasmic; the sequence is MGRLRRRQEI…PKNRWYKAWE (69 aa). A helical membrane pass occupies residues 70–90; it reads MFILVWAIYSSLFTPMEFGFF. At 91 to 97 the chain is on the extracellular side; that stretch reads RGLPERL. Residues 98-118 form a helical membrane-spanning segment; it reads FVLDIVGQIAFLVDIVLQFFV. Residues 119–141 lie on the Cytoplasmic side of the membrane; the sequence is AYRDTQTYRTVYKPTRIAFRYLK. The helical transmembrane segment at 142–162 threads the bilayer; that stretch reads SHFLMDFIGCFPWDLIYKASG. Residues 163–168 lie on the Extracellular side of the membrane; it reads KHELVR. The helical; Voltage-sensor transmembrane segment at 169-189 threads the bilayer; sequence YLLWIRLFRVRKVVEFFQRLE. Residues 190 to 203 are Cytoplasmic-facing; it reads KDTRINYLFTRILK. The chain crosses the membrane as a helical span at residues 204 to 224; the sequence is LLFVEVYCTHTAACIFYYLAT. Over 225 to 259 the chain is Extracellular; that stretch reads TLPPENEGYTWIGSLKLGDYSYENFREIDLWKRYT. The segment at residues 260–279 is an intramembrane region (pore-forming); it reads TALYFAIVTMATVGYGDIHA. At 280–285 the chain is on the extracellular side; that stretch reads VNLREM. The chain crosses the membrane as a helical span at residues 286-306; that stretch reads IFVMIYVSFDMVLGAYLIGNI. At 307–820 the chain is on the cytoplasmic side; that stretch reads TALIVKGSNT…YMISDTTDQT (514 aa). Residue 386-508 coordinates a nucleoside 3',5'-cyclic phosphate; that stretch reads LFKGCSTEFI…ILNNIMEEKE (123 aa). ANK repeat units lie at residues 528–559, 563–592, 596–625, 627–656, 660–689, and 693–722; these read EAELALKVNSAAFQGDFYQLKSLIRSGADPNK, DGRSPLHLAACRGYEDITLFLIQEGVDVNL, FGHTPLFEAVKAGQEGVIGLLVKEGASFNL, DSGNFLCTTVAKGDSDFLKRLLSSGMNPNS, DHRTPLHVAASEGLFLMAKMLVEAGASVIS, and WGNSPLDEARLCGNKKLIKLLEDVKNAQSS. One can recognise a KHA domain in the interval 740–820; the sequence is KCTVFPFHPQ…YMISDTTDQT (81 aa).

The protein belongs to the potassium channel family. Plant (TC 1.A.1.4) subfamily. As to quaternary structure, the potassium channel is probably composed of a homo- or heterotetrameric complex of pore-forming subunits. In terms of tissue distribution, expressed in guard cell-containing tissues, in root epidermal cells and in root hairs. Detected in vascular cells of the root and shoot.

It is found in the membrane. Its function is as follows. Major selective outward-rectifying potassium channel of the guard cell membrane. Involved in regulation of stomatal movements according to the water status. Assuming opened or closed conformations in response to the voltage difference across the membrane, the channel is activated by depolarization. Conductance of the channel is modulated in a potassium-dependent fashion. May interact with the cytoskeleton or with regulatory proteins. The sequence is that of Potassium channel GORK (GORK) from Arabidopsis thaliana (Mouse-ear cress).